The primary structure comprises 335 residues: MKKIAIDAMGGDHAPKAIVEGVNQAIEAFSDIEVQLYGDQSRIESYLVKSDRVSIVHTDEKINSDDEPAKAIRRKKNASMVLAARAVKDGRADAVLSAGNTGALLAAGLFIIGRIKGVDRPGLLSTLPTVDGSGFDMLDLGANAENTAEHLHQYAILGSFYAKHVRGIAKPRIGLLNNGTEATKGDSLRKEVYNFLASDSSLQFIGNVEARDLMSGVADVVVADGFTGNAVLKSIEGTAMSIMGQLKSAIAVGGVKAKFGALLLKSSLYDLKDTLDYSSAGGAVLFGLKAPLVKSHGSSDAKAIFHTIKQVRTMLETDVVGQLVEEFSKESDVND.

It belongs to the PlsX family. In terms of assembly, homodimer. Probably interacts with PlsY.

Its subcellular location is the cytoplasm. It catalyses the reaction a fatty acyl-[ACP] + phosphate = an acyl phosphate + holo-[ACP]. Its pathway is lipid metabolism; phospholipid metabolism. Catalyzes the reversible formation of acyl-phosphate (acyl-PO(4)) from acyl-[acyl-carrier-protein] (acyl-ACP). This enzyme utilizes acyl-ACP as fatty acyl donor, but not acyl-CoA. In Streptococcus equi subsp. zooepidemicus (strain MGCS10565), this protein is Phosphate acyltransferase.